The chain runs to 147 residues: Small ribosomal subunit protein uS12 (147 aa).

It belongs to the universal ribosomal protein uS12 family. As to quaternary structure, part of the 30S ribosomal subunit.

In terms of biological role, with S4 and S5 plays an important role in translational accuracy. Located at the interface of the 30S and 50S subunits. The chain is Small ribosomal subunit protein uS12 from Saccharolobus solfataricus (strain ATCC 35092 / DSM 1617 / JCM 11322 / P2) (Sulfolobus solfataricus).